The following is a 119-amino-acid chain: Small ribosomal subunit protein uS13m (119 aa).

Belongs to the universal ribosomal protein uS13 family. As to quaternary structure, part of the small ribosomal subunit.

Its subcellular location is the mitochondrion. In terms of biological role, located at the top of the head of the small subunit, it contacts several helices of the small subunit rRNA. This chain is Small ribosomal subunit protein uS13m (RPS13), found in Acanthamoeba castellanii (Amoeba).